Consider the following 429-residue polypeptide: Serine hydroxymethyltransferase (429 aa).

Residues Leu-130 and 134-136 (GHL) contribute to the (6S)-5,6,7,8-tetrahydrofolate site. Residue Lys-239 is modified to N6-(pyridoxal phosphate)lysine.

This sequence belongs to the SHMT family. As to quaternary structure, homodimer. It depends on pyridoxal 5'-phosphate as a cofactor.

The protein resides in the cytoplasm. It carries out the reaction (6R)-5,10-methylene-5,6,7,8-tetrahydrofolate + glycine + H2O = (6S)-5,6,7,8-tetrahydrofolate + L-serine. It functions in the pathway one-carbon metabolism; tetrahydrofolate interconversion. It participates in amino-acid biosynthesis; glycine biosynthesis; glycine from L-serine: step 1/1. Catalyzes the reversible interconversion of serine and glycine with tetrahydrofolate (THF) serving as the one-carbon carrier. This reaction serves as the major source of one-carbon groups required for the biosynthesis of purines, thymidylate, methionine, and other important biomolecules. Also exhibits THF-independent aldolase activity toward beta-hydroxyamino acids, producing glycine and aldehydes, via a retro-aldol mechanism. This Phenylobacterium zucineum (strain HLK1) protein is Serine hydroxymethyltransferase.